Reading from the N-terminus, the 259-residue chain is Protein-tyrosine phosphatase RolB (259 aa).

The interval 219 to 259 (GISRPAASSPEPDLTLRLSGPDQEGEEGVMKPAAVNLKKEA) is disordered.

It catalyses the reaction O-phospho-L-tyrosyl-[protein] + H2O = L-tyrosyl-[protein] + phosphate. Functionally, induces differentiation and growth of neoplastic roots (hairy roots). Seems to function as a tyrosine phosphatase. The chain is Protein-tyrosine phosphatase RolB (rolB) from Rhizobium rhizogenes (Agrobacterium rhizogenes).